Reading from the N-terminus, the 69-residue chain is Ribosome modulation factor (69 aa).

This sequence belongs to the ribosome modulation factor family.

It localises to the cytoplasm. Functionally, during stationary phase, converts 70S ribosomes to an inactive dimeric form (100S ribosomes). The polypeptide is Ribosome modulation factor (Marinomonas mediterranea (strain ATCC 700492 / JCM 21426 / NBRC 103028 / MMB-1)).